The chain runs to 264 residues: S-adenosylmethionine decarboxylase proenzyme (264 aa).

Residue S112 is the Schiff-base intermediate with substrate; via pyruvic acid of the active site. At S112 the chain carries Pyruvic acid (Ser); by autocatalysis. H117 (proton acceptor; for processing activity) is an active-site residue. The Proton donor; for catalytic activity role is filled by C140.

This sequence belongs to the prokaryotic AdoMetDC family. Type 2 subfamily. Heterooctamer of four alpha and four beta chains arranged as a tetramer of alpha/beta heterodimers. It depends on pyruvate as a cofactor. Is synthesized initially as an inactive proenzyme. Formation of the active enzyme involves a self-maturation process in which the active site pyruvoyl group is generated from an internal serine residue via an autocatalytic post-translational modification. Two non-identical subunits are generated from the proenzyme in this reaction, and the pyruvate is formed at the N-terminus of the alpha chain, which is derived from the carboxyl end of the proenzyme. The post-translation cleavage follows an unusual pathway, termed non-hydrolytic serinolysis, in which the side chain hydroxyl group of the serine supplies its oxygen atom to form the C-terminus of the beta chain, while the remainder of the serine residue undergoes an oxidative deamination to produce ammonia and the pyruvoyl group blocking the N-terminus of the alpha chain.

The catalysed reaction is S-adenosyl-L-methionine + H(+) = S-adenosyl 3-(methylsulfanyl)propylamine + CO2. It functions in the pathway amine and polyamine biosynthesis; S-adenosylmethioninamine biosynthesis; S-adenosylmethioninamine from S-adenosyl-L-methionine: step 1/1. Catalyzes the decarboxylation of S-adenosylmethionine to S-adenosylmethioninamine (dcAdoMet), the propylamine donor required for the synthesis of the polyamines spermine and spermidine from the diamine putrescine. In Yersinia enterocolitica serotype O:8 / biotype 1B (strain NCTC 13174 / 8081), this protein is S-adenosylmethionine decarboxylase proenzyme.